Here is a 228-residue protein sequence, read N- to C-terminus: Trichome differentiation protein GL1 (228 aa).

HTH myb-type domains are found at residues 11–63 and 64–118; these read NQEY…MNYL and SPNV…SKKL. 2 DNA-binding regions (H-T-H motif) span residues 39 to 63 and 91 to 114; these read WNRIVRKTGLKRCGKSCRLRWMNYL and WSLIAKRVPGRTDNQVKNYWNTHL.

As to quaternary structure, homodimer and heterodimer with MYB82. Interacts directly with GL3 and BHLH2. Part of a complex made of GL1, GL3 or BHLH2, and TTG1. Also interacts with BHLH2/EGL3/MYC146 and BHLH12/MYC1. Interacts with MYB82. As to expression, expressed in leaves, stems and flowers. Expressed in trichome cells and in leaf primordia.

Its subcellular location is the nucleus. Transcription activator, when associated with BHLH2/EGL3/MYC146 or BHLH12/MYC1. Involved in epidermal cell fate specification in leaves. Together with TTG1 and GL3, promotes trichome formation and endoreplication. Regulates the production of a signal that induces hair (trichome) precursor cells on leaf primordia to differentiate. Binds to the WER-binding sites (WBS) promoter regions and activates the transcription of target genes. The polypeptide is Trichome differentiation protein GL1 (Arabidopsis thaliana (Mouse-ear cress)).